Reading from the N-terminus, the 241-residue chain is Corrinoid adenosyltransferase MMAB (241 aa).

Residues 1-26 (MAVWGPGGRLGLRGCLGARKLLCPRF) constitute a mitochondrion transit peptide. A disordered region spans residues 27–69 (QSRGPQGVEDGDRPQPSSKTPKVPKIYTKTGDKGFSSTFTGER). ATP contacts are provided by residues 54-63 (TKTGDKGFSS) and Lys-72. Ser-128 is modified (phosphoserine). 184-188 (RRAER) serves as a coordination point for ATP. Lys-205 is subject to N6-succinyllysine. Asn-208 is a binding site for ATP. Residue Lys-224 is modified to N6-acetyllysine; alternate. Residue Lys-224 is modified to N6-succinyllysine; alternate.

Belongs to the Cob(I)alamin adenosyltransferase family. Homotrimer.

It localises to the mitochondrion. It carries out the reaction cob(I)alamin-[corrinoid adenosyltransferase] + ATP = apo-[corrinoid adenosyltransferase] + adenosylcob(III)alamin + triphosphate. Functionally, converts cob(I)alamin to adenosylcobalamin (adenosylcob(III)alamin), a coenzyme for methylmalonyl-CoA mutase, therefore participates in the final step of the vitamin B12 conversion. Generates adenosylcobalamin (AdoCbl) and directly delivers the cofactor to MUT in a transfer that is stimulated by ATP-binding to MMAB and gated by MMAA. This is Corrinoid adenosyltransferase MMAB from Bos taurus (Bovine).